We begin with the raw amino-acid sequence, 304 residues long: Probable actin-related protein 2/3 complex subunit 2 (304 aa).

It belongs to the ARPC2 family. In terms of assembly, component of the Arp2/3 complex.

Its subcellular location is the cytoplasm. The protein localises to the cytoskeleton. Its function is as follows. Functions as actin-binding component of the Arp2/3 complex which is involved in regulation of actin polymerization and together with an activating nucleation-promoting factor (NPF) mediates the formation of branched actin networks. Seems to contact the mother actin filament. This chain is Probable actin-related protein 2/3 complex subunit 2 (Arc-p34), found in Anopheles gambiae (African malaria mosquito).